Here is a 195-residue protein sequence, read N- to C-terminus: 2-amino-4-hydroxy-6-hydroxymethyldihydropteridine pyrophosphokinase (195 aa).

The protein belongs to the HPPK family.

It catalyses the reaction 6-hydroxymethyl-7,8-dihydropterin + ATP = (7,8-dihydropterin-6-yl)methyl diphosphate + AMP + H(+). The protein operates within cofactor biosynthesis; tetrahydrofolate biosynthesis; 2-amino-4-hydroxy-6-hydroxymethyl-7,8-dihydropteridine diphosphate from 7,8-dihydroneopterin triphosphate: step 4/4. Functionally, catalyzes the transfer of pyrophosphate from adenosine triphosphate (ATP) to 6-hydroxymethyl-7,8-dihydropterin, an enzymatic step in folate biosynthesis pathway. The polypeptide is 2-amino-4-hydroxy-6-hydroxymethyldihydropteridine pyrophosphokinase (folK) (Synechocystis sp. (strain ATCC 27184 / PCC 6803 / Kazusa)).